The sequence spans 89 residues: Small ribosomal subunit protein uS17 (89 aa).

Belongs to the universal ribosomal protein uS17 family. Part of the 30S ribosomal subunit.

Its function is as follows. One of the primary rRNA binding proteins, it binds specifically to the 5'-end of 16S ribosomal RNA. This chain is Small ribosomal subunit protein uS17, found in Acidovorax ebreus (strain TPSY) (Diaphorobacter sp. (strain TPSY)).